The chain runs to 380 residues: MSKKDFYDVLGVNRDASDDDIKKAYRKLAMKYHPDRNPDSKDAEEKFKEAKEAYEILSDAQKRAAYDQYGHAGVDPQAGFGGAGGQQGFGGFGDAFADIFGDIFGGGARAGGGGGRNAVYRGSDLRYNLEITLEEAARGCEKQIRIPTMEECSHCHGSGAKPGTEPKTCPTCGGAGQVRMQQGFFSIQQTCPTCHGSGKQITDPCNICHGAGRVKSQKTLNVKIPAGVDDGDRIRLSGEGEPGTNGGPAGDLYVVTHIKPHAVFERDGMDLHCEMPISFATAALGGEIEIPTLDGAAKLRIPAETQSGQVFRLRGKGIKALRASQHGDLMCHVQVETPVKLTDRQKELLREFDAISQGAPAKHNPKAQSFMDKLKDFFGG.

Residues 5–70 enclose the J domain; sequence DFYDVLGVNR…QKRAAYDQYG (66 aa). The CR-type zinc-finger motif lies at 139–217; sequence GCEKQIRIPT…CHGAGRVKSQ (79 aa). 8 residues coordinate Zn(2+): Cys152, Cys155, Cys169, Cys172, Cys191, Cys194, Cys205, and Cys208. CXXCXGXG motif repeat units lie at residues 152–159, 169–176, 191–198, and 205–212; these read CSHCHGSG, CPTCGGAG, CPTCHGSG, and CNICHGAG.

This sequence belongs to the DnaJ family. Homodimer. Zn(2+) serves as cofactor.

The protein localises to the cytoplasm. In terms of biological role, participates actively in the response to hyperosmotic and heat shock by preventing the aggregation of stress-denatured proteins and by disaggregating proteins, also in an autonomous, DnaK-independent fashion. Unfolded proteins bind initially to DnaJ; upon interaction with the DnaJ-bound protein, DnaK hydrolyzes its bound ATP, resulting in the formation of a stable complex. GrpE releases ADP from DnaK; ATP binding to DnaK triggers the release of the substrate protein, thus completing the reaction cycle. Several rounds of ATP-dependent interactions between DnaJ, DnaK and GrpE are required for fully efficient folding. Also involved, together with DnaK and GrpE, in the DNA replication of plasmids through activation of initiation proteins. This Laribacter hongkongensis (strain HLHK9) protein is Chaperone protein DnaJ.